We begin with the raw amino-acid sequence, 163 residues long: Nucleotide-binding protein MUL_0671 (163 aa).

Belongs to the YajQ family.

Nucleotide-binding protein. This is Nucleotide-binding protein MUL_0671 from Mycobacterium ulcerans (strain Agy99).